Here is a 75-residue protein sequence, read N- to C-terminus: Anionic peptide (75 aa).

Positions 1–24 (MVSKSLIVLLLVSVLVSTFYTSEA) are cleaved as a signal peptide.

It belongs to the non-disulfide-bridged peptide (NDBP) superfamily. Expressed by the venom gland.

The protein resides in the secreted. This is Anionic peptide from Tityus discrepans (Venezuelan scorpion).